Consider the following 335-residue polypeptide: Deoxyhypusine hydroxylase (335 aa).

HEAT-like PBS-type repeat units follow at residues 71–97, 104–130, 200–233, 238–264, and 271–298; these read LKHE…VAKD, CRHE…LRDN, LRYR…GLKD, FRHE…ALSN, and VRHE…FLND. H73, E74, H106, and E107 together coordinate Fe cation. Fe cation contacts are provided by H240, E241, H273, and E274.

It belongs to the deoxyhypusine hydroxylase family. Fe(2+) is required as a cofactor.

It is found in the cytoplasm. It localises to the nucleus. The enzyme catalyses [eIF5A protein]-deoxyhypusine + AH2 + O2 = [eIF5A protein]-hypusine + A + H2O. Its pathway is protein modification; eIF5A hypusination. In terms of biological role, catalyzes the hydroxylation of the N(6)-(4-aminobutyl)-L-lysine intermediate to form hypusine, an essential post-translational modification only found in mature eIF-5A factor. The sequence is that of Deoxyhypusine hydroxylase (lia1) from Aspergillus fumigatus (strain ATCC MYA-4609 / CBS 101355 / FGSC A1100 / Af293) (Neosartorya fumigata).